We begin with the raw amino-acid sequence, 624 residues long: Aliphatic sulfonate oxidoreductase, WOR-like subunit (624 aa).

Residues lysine 77, serine 93, valine 94, serine 96, histidine 195, alanine 196, glycine 198, and tyrosine 199 each coordinate tungstopterin. Residues aspartate 299, cysteine 302, and cysteine 306 each coordinate [4Fe-4S] cluster. Tungstopterin-binding residues include aspartate 353, leucine 357, aspartate 358, glycine 359, threonine 470, aspartate 490, isoleucine 494, cysteine 495, and asparagine 496. Cysteine 495 is a binding site for [4Fe-4S] cluster. The disordered stretch occupies residues 552–575 (KDDDNPPRFYEPLPSGPVKGKAPN).

The protein belongs to the AOR/FOR family. Heterodimer composed of a small WOR5-S subunit, with four [4Fe-4S] clusters, and a large WOR5-L subunit, containing the active site tungsto-bispyranopterin cofactor as well as another [4Fe-4S] cluster. [4Fe-4S] cluster serves as cofactor. It depends on tungstopterin as a cofactor.

The protein localises to the cytoplasm. The enzyme catalyses an aliphatic sulfonate + 4 oxidized [4Fe-4S]-[ferredoxin] + 2 H2O = 4 reduced [4Fe-4S]-[ferredoxin] + a carboxylate + sulfite + 6 H(+). The catalysed reaction is an aliphatic sulfonate + 2 oxidized [4Fe-4S]-[ferredoxin] + H2O = 2 reduced [4Fe-4S]-[ferredoxin] + an aldehyde + sulfite + 3 H(+). It catalyses the reaction 2 oxidized [4Fe-4S]-[ferredoxin] + an aldehyde + H2O = 2 reduced [4Fe-4S]-[ferredoxin] + a carboxylate + 3 H(+). It carries out the reaction 4 oxidized [4Fe-4S]-[ferredoxin] + taurine + 2 H2O = 4 reduced [4Fe-4S]-[ferredoxin] + sulfite + glycine + 6 H(+). The enzyme catalyses 2 oxidized [4Fe-4S]-[ferredoxin] + taurine + H2O = aminoacetaldehyde + 2 reduced [4Fe-4S]-[ferredoxin] + sulfite + 3 H(+). The catalysed reaction is aminoacetaldehyde + 2 oxidized [4Fe-4S]-[ferredoxin] + H2O = 2 reduced [4Fe-4S]-[ferredoxin] + glycine + 3 H(+). Its function is as follows. WOR-like catalytic subunit of an oxidoreductase that can desulfonate and oxidize aliphatic sulfonates such as taurine. The activity involves two steps: an oxidative desulfonation reaction, followed by the activation of a second water molecule and oxidation of the resulting aldehyde. May be involved in the oxidation of various aliphatic sulfonates and also phosphonates. In vitro, has a broad substrate specificity with a high affinity for several substituted and nonsubstituted aliphatic and aromatic aldehydes with various chain lengths, with methyl viologen or benzyl viologen as electron acceptor. Ferredoxin is the physiological electron acceptor. This Pyrococcus furiosus (strain ATCC 43587 / DSM 3638 / JCM 8422 / Vc1) protein is Aliphatic sulfonate oxidoreductase, WOR-like subunit.